Consider the following 388-residue polypeptide: Succinate--CoA ligase [ADP-forming] subunit beta (388 aa).

One can recognise an ATP-grasp domain in the interval 9–244; the sequence is KQLFAEYGLP…PSQDDAREAH (236 aa). ATP contacts are provided by residues lysine 46, 53–55, glutamate 99, threonine 102, and glutamate 107; that span reads GRG. Residues asparagine 199 and aspartate 213 each contribute to the Mg(2+) site. Residues asparagine 264 and 321–323 each bind substrate; that span reads GIV.

This sequence belongs to the succinate/malate CoA ligase beta subunit family. In terms of assembly, heterotetramer of two alpha and two beta subunits. It depends on Mg(2+) as a cofactor.

The enzyme catalyses succinate + ATP + CoA = succinyl-CoA + ADP + phosphate. It carries out the reaction GTP + succinate + CoA = succinyl-CoA + GDP + phosphate. Its pathway is carbohydrate metabolism; tricarboxylic acid cycle; succinate from succinyl-CoA (ligase route): step 1/1. Its function is as follows. Succinyl-CoA synthetase functions in the citric acid cycle (TCA), coupling the hydrolysis of succinyl-CoA to the synthesis of either ATP or GTP and thus represents the only step of substrate-level phosphorylation in the TCA. The beta subunit provides nucleotide specificity of the enzyme and binds the substrate succinate, while the binding sites for coenzyme A and phosphate are found in the alpha subunit. In Pseudomonas entomophila (strain L48), this protein is Succinate--CoA ligase [ADP-forming] subunit beta.